The following is a 246-amino-acid chain: Exosome complex component SKI6 (246 aa).

It belongs to the RNase PH family. In terms of assembly, component of the RNA exosome complex. Specifically part of the catalytically inactive RNA exosome core complex (Exo-9) which may associate with the catalytic subunits RRP6 and DIS3 in cytoplasmic- and nuclear-specific RNA exosome complex forms. Exo-9 is formed by a hexameric base ring of RNase PH domain-containing subunits and a cap ring consisting of CSL4, RRP4 and RRP40.

It localises to the cytoplasm. Its subcellular location is the nucleus. The protein localises to the nucleolus. In terms of biological role, non-catalytic component of the RNA exosome complex which has 3'-&gt;5' exoribonuclease activity and participates in a multitude of cellular RNA processing and degradation events. In the nucleus, the RNA exosome complex is involved in proper maturation of stable RNA species such as rRNA, snRNA and snoRNA, in the elimination of RNA processing by-products and non-coding 'pervasive' transcripts, such as antisense RNA species and cryptic unstable transcripts (CUTs), and of mRNAs with processing defects, thereby limiting or excluding their export to the cytoplasm. In the cytoplasm, the RNA exosome complex is involved in general mRNA turnover and in RNA surveillance pathways, preventing translation of aberrant mRNAs. The catalytic inactive RNA exosome core complex of 9 subunits (Exo-9) is proposed to play a pivotal role in the binding and presentation of RNA for ribonucleolysis, and to serve as a scaffold for the association with catalytic subunits and accessory proteins or complexes. SKI6 is part of the hexameric ring of RNase PH domain-containing subunits proposed to form a central channel which threads RNA substrates for degradation. This chain is Exosome complex component SKI6 (SKI6), found in Saccharomyces cerevisiae (strain ATCC 204508 / S288c) (Baker's yeast).